The following is a 385-amino-acid chain: 8-amino-7-oxononanoate synthase (385 aa).

Position 21 (Arg-21) interacts with substrate. A pyridoxal 5'-phosphate-binding site is contributed by 108 to 109 (GF). His-133 lines the substrate pocket. The pyridoxal 5'-phosphate site is built by Ser-179, His-207, and Thr-233. Lys-236 is subject to N6-(pyridoxal phosphate)lysine. Substrate is bound at residue Thr-352.

Belongs to the class-II pyridoxal-phosphate-dependent aminotransferase family. BioF subfamily. As to quaternary structure, homodimer. Pyridoxal 5'-phosphate serves as cofactor.

The enzyme catalyses 6-carboxyhexanoyl-[ACP] + L-alanine + H(+) = (8S)-8-amino-7-oxononanoate + holo-[ACP] + CO2. It functions in the pathway cofactor biosynthesis; biotin biosynthesis. Catalyzes the decarboxylative condensation of pimeloyl-[acyl-carrier protein] and L-alanine to produce 8-amino-7-oxononanoate (AON), [acyl-carrier protein], and carbon dioxide. In Salmonella paratyphi B (strain ATCC BAA-1250 / SPB7), this protein is 8-amino-7-oxononanoate synthase.